A 378-amino-acid chain; its full sequence is Ret finger protein-like 2 (378 aa).

An RING-type; degenerate zinc finger spans residues 101 to 143 (CPVCSDYLEKPMSLECGCAVCLKCINSLQKEPHGEDLLCCCSS). The region spanning 168-362 (EPKLKKILQM…DQGVLSICPL (195 aa)) is the B30.2/SPRY domain.

In terms of tissue distribution, seems to be expressed in prostate and less abundantly in adult brain, fetal liver, and fetal kidney.

The protein is Ret finger protein-like 2 (RFPL2) of Homo sapiens (Human).